The chain runs to 316 residues: Cuticle collagen 12 (316 aa).

Positions 1 to 36 (MTEDPKQIAQETESLRKVAFFGIAVSTIATLTAIIA) are cleaved as a signal peptide. Composition is skewed to low complexity over residues 127 to 157 (SGAAGPAGSPGQDGAPGNDGAPGAPGNPGQD) and 183 to 204 (APGQKGPSGAPGAPGQSGGAAL). Positions 127 to 316 (SGAAGPAGSP…CPPPRTAPGY (190 aa)) are disordered. Triple-helical region stretches follow at residues 128–157 (GAAGPAGSPGQDGAPGNDGAPGAPGNPGQD), 176–202 (GPPGPSGAPGQKGPSGAPGAPGQSGGA), 206–235 (GPPGPAGPPGPAGQPGSNGNAGAPGAPGQV), 240–266 (GTPGPAGPPGSPGPAGAPGQPGQAGSS), and 269–304 (GGPGPQGDAGAPGAPGAPGQAGAPGQDGESGSEGAC). Residues 205–217 (PGPPGPAGPPGPA) show a composition bias toward pro residues. The span at 219-234 (QPGSNGNAGAPGAPGQ) shows a compositional bias: low complexity. The span at 241–251 (TPGPAGPPGSP) shows a compositional bias: pro residues. Low complexity-rich tracts occupy residues 256–266 (APGQPGQAGSS) and 276–295 (DAGAPGAPGAPGQAGAPGQD). Positions 307 to 316 (CPPPRTAPGY) are enriched in pro residues.

This sequence belongs to the cuticular collagen family. In terms of assembly, collagen polypeptide chains are complexed within the cuticle by disulfide bonds and other types of covalent cross-links.

Nematode cuticles are composed largely of collagen-like proteins. The cuticle functions both as an exoskeleton and as a barrier to protect the worm from its environment. The sequence is that of Cuticle collagen 12 (col-12) from Caenorhabditis elegans.